The primary structure comprises 215 residues: uncharacterized protein (215 aa).

The signal sequence occupies residues 1–17 (MKKVLASATILSLMLVG). The segment at 17-110 (GCSNGGNDES…NKQQQSVQDN (94 aa)) is disordered. Cys-18 is lipidated: N-palmitoyl cysteine. Cys-18 carries the S-diacylglycerol cysteine lipid modification. A compositionally biased stretch (basic and acidic residues) spans 25–69 (ESSHKDDSSKTEQKDKSSSQHDSKKDSKRNDTNNKQDNQENKSNK). The segment covering 70–95 (EQTSNQNSNAGEQRTSERPTTNSNGI) has biased composition (polar residues). Residues 96-110 (SSDNQNKQQQSVQDN) are compositionally biased toward low complexity.

Its subcellular location is the cell membrane. This is an uncharacterized protein from Staphylococcus epidermidis (strain ATCC 12228 / FDA PCI 1200).